A 634-amino-acid polypeptide reads, in one-letter code: Bacteriophytochrome (634 aa).

Residue Cys-13 coordinates biliverdin IXalpha. A PAS 1 domain is found at 13 to 118 (CAREPIHIPG…YPQQWLVEME (106 aa)). Residues 13-514 (CAREPIHIPG…ELMERKRFQQ (502 aa)) form a photosensory core domain region. The GAF domain maps to 151-305 (RVAKGLRSLI…VTDAVARTLA (155 aa)). A phytochrome-specific (PHY) region spans residues 325–508 (TVREKLITDF…SLRVLIELME (184 aa)). Residues 452 to 480 (WAGNPQLAKLEDIPNSRLSPRKSFDLWQQ) are tongue domain. The 76-residue stretch at 515-590 (DFTLLEASLS…ELLQDALRNG (76 aa)) folds into the PAS 2 domain. Positions 515-634 (DFTLLEASLS…HWLLQLRDPE (120 aa)) are PAS9, output module, not required to bind biliverdin IX-alpha, required for dimerization.

It in the N-terminal section; belongs to the phytochrome family. As to quaternary structure, forms head-to-head homodimers. In terms of processing, contains one covalently linked biliverdin IX-alpha chromophore; present in the crystal structure as a mixture of Pr and Meta-R configurations.

In terms of biological role, photoreceptor which exists in two forms that are reversibly interconvertible by light: far-red light (733 nm) converts protein to the red-absorbing (Pr) form, while red light (630 nm) partly converts the protein to the far-red-absorbing (Pfr) form. Regulates virulence of X.campestris pv. campestris on its host plants, perhaps by fine-tuning expression to ambient light levels and/or spatial cues. The Pr form may sense light and partially inhibit virulence; in the dark (Pfr form) biofilm and xanathan production rise and bacteria are more virulent. Strains overexpressing this protein have significantly decreased amounts of extracellular beta-1,4-endoglucanase, produce less xanthin and have decreased transcription of genes involved in virulence such as endoglucanases, type 2 secretion systems, xanthan production and flagellar-dependent motility. The sequence is that of Bacteriophytochrome (bphP) from Xanthomonas campestris pv. campestris (strain 8004).